Reading from the N-terminus, the 477-residue chain is Inner membrane transporter YgjI (477 aa).

Topologically, residues 1–8 (MSDTKRNT) are periplasmic. The helical transmembrane segment at 9–29 (IGKFGLLSLTFAAVYSFNNVI) threads the bilayer. Over 30 to 41 (NNNIELGLASAP) the chain is Cytoplasmic. Residues 42–62 (MFFLATIFYFIPFCLIIAEFV) traverse the membrane as a helical segment. The Periplasmic segment spans residues 63 to 83 (SLNKNSEAGVYAWVKSSLGGR). The chain crosses the membrane as a helical span at residues 84–104 (WAFITAYTYWFVNLFFFTSLL). The Cytoplasmic portion of the chain corresponds to 105–120 (PRVIAYASYAFLGYEY). The helical transmembrane segment at 121-141 (IMTPVATTIISMVLFAFSTWV) threads the bilayer. At 142 to 158 (STNGAKMLGPITSVTST) the chain is on the periplasmic side. A helical transmembrane segment spans residues 159-179 (LMLLLTLSYILLAGTALVGGV). At 180 to 196 (QPADAITVDAMIPNFNW) the chain is on the cytoplasmic side. A helical transmembrane segment spans residues 197 to 217 (AFLGVTTWIFMAAGGAESVAV). Residues 218–232 (YVNDVKGGSKSFVKV) lie on the Periplasmic side of the membrane. Residues 233 to 253 (IILAGIFIGVLYSVSSVLINV) form a helical membrane-spanning segment. The Cytoplasmic portion of the chain corresponds to 254–263 (FVSSKELKFT). The helical transmembrane segment at 264–284 (GGSVQVFHGMAAYFGLPEALM) threads the bilayer. At 285 to 286 (NR) the chain is on the periplasmic side. The chain crosses the membrane as a helical span at residues 287 to 307 (FVGLVSFTAMFGSLLMWTATP). At 308–335 (VKIFFSEIPEGIFGKKTVELNENGVPAR) the chain is on the cytoplasmic side. The helical transmembrane segment at 336–356 (AAWIQFLIVIPLMIIPMLGSN) threads the bilayer. Over 357-364 (TVQDLMNT) the chain is Periplasmic. The helical transmembrane segment at 365–385 (IINMTAAASMLPPLFIMLAYL) threads the bilayer. Residues 386-405 (NLRAKLDHLPRDFRMGSRRT) are Cytoplasmic-facing. The chain crosses the membrane as a helical span at residues 406 to 426 (GIIVVSMLIAIFAVGFVASTF). Residues 427–431 (PTGAN) lie on the Periplasmic side of the membrane. The chain crosses the membrane as a helical span at residues 432–452 (ILTIIFYNVGGIVIFLGFAWW). Residues 453 to 477 (KYSKYIKGLTAEERHIEATPASNVD) lie on the Cytoplasmic side of the membrane.

The protein belongs to the amino acid-polyamine-organocation (APC) superfamily.

It localises to the cell inner membrane. The polypeptide is Inner membrane transporter YgjI (ygjI) (Escherichia coli (strain K12)).